The following is a 540-amino-acid chain: MSLKLPQAPNSGLFKQGYSSFSNADGAIIRNVEAVREIASILLTSMGPSGRNKIIVNKLGKKFITNDAATMLNELEIVHPVVKILIQASKQQEFEMGDNTNLVIILAGEFLNVAEKLLTLGLNVSEIIQGFNLANKFVMKTLDELVVEKVESFETDLLKAVKPVIAAKQYGVEDTIAKLVVDAVALVMKNGSFNVDNIRVVKVMGASLSQSQVVKGMVFPREPEGTVKNADQIQSCRVYQPHRYFHHRNQRYSCSSTMPRKCLISPRAKNNSWTSCARKSTIQGLRWLLPGSSVGELALHYLNKYGILVLRVPSKFDLRRICQVCGATPLPRLGAPTPDEMGEIDIIETKEIGGDRVTIFRQDESSSRTATIVVRGATQNNLDDIERAIDDGVNSIKGLIKDNRLLPGAGAVEIELMKRITAYQSTPGLLQLAIKSFAKAFEVIPRVLAETSGHDSSEILSKLHAAHAEDTGLRAGIDIDSGEVADTAVLDILATKKSAIDLAVDATNTILSIDQIIMAKRAGGPVMPQQPRPGNWDQDD.

The protein belongs to the TCP-1 chaperonin family. As to quaternary structure, heterooligomeric complex of about 850 to 900 kDa that forms two stacked rings, 12 to 16 nm in diameter.

Its subcellular location is the cytoplasm. In terms of biological role, molecular chaperone; assists the folding of proteins upon ATP hydrolysis. Known to play a role, in vitro, in the folding of actin and tubulin. In yeast may play a role in mitotic spindle formation. The chain is T-complex protein 1 subunit theta (CCT8) from Candida albicans (Yeast).